The sequence spans 173 residues: NADH-ubiquinone oxidoreductase chain 6 (173 aa).

The next 5 helical transmembrane spans lie at 1–21 (MTYFVVFLGLCFVLGGLAVAS), 27–47 (YGVVGLVLASVVGCGWLLSLG), 48–68 (VSFVSLVLFMVYLGGMLVVFV), 87–107 (VVGYGASFVVVLMVGGVIGGF), and 139–159 (CGVGMFLVAGWGLVLTLFVVL).

It belongs to the complex I subunit 6 family.

Its subcellular location is the mitochondrion membrane. The enzyme catalyses a ubiquinone + NADH + 5 H(+)(in) = a ubiquinol + NAD(+) + 4 H(+)(out). Core subunit of the mitochondrial membrane respiratory chain NADH dehydrogenase (Complex I) that is believed to belong to the minimal assembly required for catalysis. Complex I functions in the transfer of electrons from NADH to the respiratory chain. The immediate electron acceptor for the enzyme is believed to be ubiquinone. The chain is NADH-ubiquinone oxidoreductase chain 6 (MT-ND6) from Cepphus columba (Pigeon guillemot).